The primary structure comprises 479 residues: Phosphatidylinositol 4-kinase type 2-alpha (479 aa).

Met1 is modified (N-acetylmethionine). The tract at residues 1-58 (MDETSPLVSPERAQPPEYTFPSGSGAHFPQVPGGAVRVAAAAGSGPSPPCSPGHDRER) is disordered. Phosphoserine occurs at positions 5, 9, 44, 47, and 51. Low complexity predominate over residues 31–45 (VPGGAVRVAAAAGSG). Residues 124–453 (SIYPERIYQG…VQMPPVIVET (330 aa)) enclose the PI3K/PI4K catalytic domain. The G-loop stretch occupies residues 130–136 (IYQGSSG). ATP contacts are provided by residues 131–137 (YQGSSGS) and Lys152. An important for substrate binding region spans residues 157-159 (EPY). The important for interaction with membranes stretch occupies residues 165–178 (KWTKWLQKLCCPCC). S-palmitoyl cysteine attachment occurs at residues Cys174, Cys175, Cys177, and Cys178. 261-264 (QLFV) contacts ATP. The important for interaction with membranes stretch occupies residues 268–276 (KDADYWLRR). Positions 305 to 313 (RNTDRGNDN) are catalytic loop. The segment at 344–364 (AIDNGLAFPLKHPDSWRAYPF) is activation loop. Asp346 contributes to the ATP binding site. The interval 359–368 (WRAYPFYWAW) is important for interaction with membranes. Phosphoserine is present on Ser462.

The protein belongs to the PI3/PI4-kinase family. Type II PI4K subfamily. In terms of assembly, associates with the BLOC-1 and the AP-3 complexes; the BLOC-1 complex is required for optimal binding of PI4K2A to the AP-3 complex. Interacts with BLOC1S5 and DTNBP1. Interacts with ITCH. Interacts with FOS; this interaction may enhance phosphatidylinositol phosphorylation activity. Interacts with ATG9A. Palmitoylated by ZDHHC3 and ZDHHC7 in the CCPCC motif. Palmitoylation is cholesterol-dependent, and required for TGN localization. In terms of processing, ubiquitinated by ITCH; this does not lead to proteasomal degradation. As to expression, detected in brain (at protein level).

It localises to the golgi apparatus. It is found in the trans-Golgi network membrane. The protein resides in the membrane raft. The protein localises to the endosome. Its subcellular location is the endosome membrane. It localises to the cytoplasmic vesicle. It is found in the cell projection. The protein resides in the dendrite. The protein localises to the presynaptic cell membrane. Its subcellular location is the synapse. It localises to the synaptosome. It is found in the mitochondrion. The protein resides in the membrane. The protein localises to the cell membrane. Its subcellular location is the perikaryon. It localises to the neuron projection. The catalysed reaction is a 1,2-diacyl-sn-glycero-3-phospho-(1D-myo-inositol) + ATP = a 1,2-diacyl-sn-glycero-3-phospho-(1D-myo-inositol 4-phosphate) + ADP + H(+). Membrane-bound phosphatidylinositol-4 kinase (PI4-kinase) that catalyzes the phosphorylation of phosphatidylinositol (PI) to phosphatidylinositol 4-phosphate (PI4P), a lipid that plays important roles in endocytosis, Golgi function, protein sorting and membrane trafficking and is required for prolonged survival of neurons. Besides, phosphorylation of phosphatidylinositol (PI) to phosphatidylinositol 4-phosphate (PI4P) is the first committed step in the generation of phosphatidylinositol 4,5-bisphosphate (PIP2), a precursor of the second messenger inositol 1,4,5-trisphosphate (InsP3). This is Phosphatidylinositol 4-kinase type 2-alpha (Pi4k2a) from Mus musculus (Mouse).